A 214-amino-acid polypeptide reads, in one-letter code: Urease accessory protein UreG (214 aa).

The disordered stretch occupies residues 1–20 (MSQLHAVPGRTKKLPPLRVG). GTP is bound at residue 23–30 (GPVGSGKT).

The protein belongs to the SIMIBI class G3E GTPase family. UreG subfamily. In terms of assembly, homodimer. UreD, UreF and UreG form a complex that acts as a GTP-hydrolysis-dependent molecular chaperone, activating the urease apoprotein by helping to assemble the nickel containing metallocenter of UreC. The UreE protein probably delivers the nickel.

The protein localises to the cytoplasm. Its function is as follows. Facilitates the functional incorporation of the urease nickel metallocenter. This process requires GTP hydrolysis, probably effectuated by UreG. In Leptothrix cholodnii (strain ATCC 51168 / LMG 8142 / SP-6) (Leptothrix discophora (strain SP-6)), this protein is Urease accessory protein UreG.